The chain runs to 156 residues: ATP synthase subunit b (156 aa).

A helical transmembrane segment spans residues 5-25; it reads LTLIGQAIAFAVFVWFCMKFV.

The protein belongs to the ATPase B chain family. In terms of assembly, F-type ATPases have 2 components, F(1) - the catalytic core - and F(0) - the membrane proton channel. F(1) has five subunits: alpha(3), beta(3), gamma(1), delta(1), epsilon(1). F(0) has three main subunits: a(1), b(2) and c(10-14). The alpha and beta chains form an alternating ring which encloses part of the gamma chain. F(1) is attached to F(0) by a central stalk formed by the gamma and epsilon chains, while a peripheral stalk is formed by the delta and b chains.

The protein resides in the cell inner membrane. Functionally, f(1)F(0) ATP synthase produces ATP from ADP in the presence of a proton or sodium gradient. F-type ATPases consist of two structural domains, F(1) containing the extramembraneous catalytic core and F(0) containing the membrane proton channel, linked together by a central stalk and a peripheral stalk. During catalysis, ATP synthesis in the catalytic domain of F(1) is coupled via a rotary mechanism of the central stalk subunits to proton translocation. Component of the F(0) channel, it forms part of the peripheral stalk, linking F(1) to F(0). The polypeptide is ATP synthase subunit b (Chromohalobacter salexigens (strain ATCC BAA-138 / DSM 3043 / CIP 106854 / NCIMB 13768 / 1H11)).